Reading from the N-terminus, the 304-residue chain is MPPLIALSPETSQALADRQPLVALESTIITHGMPYPQNLEVAQQVEAAVREEGAVPATIAVMGGRIRVGLDAEALEALASTPAEQVMKLSRADLAACLALGRTGATTVAATMICAHLAGIEVFATGGIGGVHRGAETSFDISADLQELAQSPVTVVAAGAKAILDLPKTLEVLETLGVPVIAFGQDQLPAFWSRESGLAAPLRMDDPAQIAASARLRRELGLSGGQLVVNPIPPEAEIPRAEMIPVVEQALSEAEAQGIAAKAVTPFLLQRIFELTQGRSLDANIALVLNNARLAARIAAAMAT.

Catalysis depends on glutamate 25, which acts as the Proton donor. Residues lysine 88 and valine 108 each contribute to the substrate site. Aspartate 140 provides a ligand contact to Mn(2+). 142 to 144 (SAD) serves as a coordination point for substrate. Lysine 161 serves as the catalytic Nucleophile.

This sequence belongs to the pseudouridine-5'-phosphate glycosidase family. In terms of assembly, homotrimer. Requires Mn(2+) as cofactor.

The catalysed reaction is D-ribose 5-phosphate + uracil = psi-UMP + H2O. Functionally, catalyzes the reversible cleavage of pseudouridine 5'-phosphate (PsiMP) to ribose 5-phosphate and uracil. Functions biologically in the cleavage direction, as part of a pseudouridine degradation pathway. This Paracoccus denitrificans (strain Pd 1222) protein is Pseudouridine-5'-phosphate glycosidase.